The following is a 147-amino-acid chain: MEEINREEFQEVVVNIGRVTKVVKGGRRFRFNALVVVGNKNGLVGFGLGKAKEVPDAIKKAVDDAFKNLIHVTIKGTTIAHDIEHKYNASRILLKPASEGTGVIAGGSTRPIVELAGIKDILTKSLGSNNPYNVVRATFDALAKIKA.

The S5 DRBM domain maps to 9–72; it reads FQEVVVNIGR…DDAFKNLIHV (64 aa).

This sequence belongs to the universal ribosomal protein uS5 family. In terms of assembly, part of the 30S ribosomal subunit. Contacts proteins S4 and S8.

With S4 and S12 plays an important role in translational accuracy. Its function is as follows. Located at the back of the 30S subunit body where it stabilizes the conformation of the head with respect to the body. This chain is Small ribosomal subunit protein uS5, found in Helicobacter pylori (strain J99 / ATCC 700824) (Campylobacter pylori J99).